The following is a 310-amino-acid chain: Pantothenate kinase (310 aa).

95–102 (GSVAVGKS) serves as a coordination point for ATP.

Belongs to the prokaryotic pantothenate kinase family.

It is found in the cytoplasm. The catalysed reaction is (R)-pantothenate + ATP = (R)-4'-phosphopantothenate + ADP + H(+). The protein operates within cofactor biosynthesis; coenzyme A biosynthesis; CoA from (R)-pantothenate: step 1/5. In Rhodococcus jostii (strain RHA1), this protein is Pantothenate kinase.